Reading from the N-terminus, the 389-residue chain is Chalcone synthase 9 (389 aa).

C164 is an active-site residue.

This sequence belongs to the thiolase-like superfamily. Chalcone/stilbene synthases family.

The enzyme catalyses (E)-4-coumaroyl-CoA + 3 malonyl-CoA + 3 H(+) = 2',4,4',6'-tetrahydroxychalcone + 3 CO2 + 4 CoA. The protein operates within secondary metabolite biosynthesis; flavonoid biosynthesis. The primary product of this enzyme is 4,2',4',6'-tetrahydroxychalcone (also termed naringenin-chalcone or chalcone) which can under specific conditions spontaneously isomerize into naringenin. In Medicago sativa (Alfalfa), this protein is Chalcone synthase 9 (CHS9).